Consider the following 220-residue polypeptide: Uracil-DNA glycosylase (220 aa).

The Proton acceptor role is filled by aspartate 61.

This sequence belongs to the uracil-DNA glycosylase (UDG) superfamily. UNG family.

It is found in the cytoplasm. It catalyses the reaction Hydrolyzes single-stranded DNA or mismatched double-stranded DNA and polynucleotides, releasing free uracil.. Its function is as follows. Excises uracil residues from the DNA which can arise as a result of misincorporation of dUMP residues by DNA polymerase or due to deamination of cytosine. The protein is Uracil-DNA glycosylase of Glaesserella parasuis serovar 5 (strain SH0165) (Haemophilus parasuis).